A 258-amino-acid chain; its full sequence is Trypsin eta (258 aa).

A signal peptide spans 1 to 22; it reads MNKVILRILALLFLLGIGAVSA. A propeptide spans 23–27 (activation peptide); it reads QPDGR. In terms of domain architecture, Peptidase S1 spans 28 to 258; the sequence is IVGGADTTNY…YFKDWIASRV (231 aa). Cys59 and Cys75 are joined by a disulfide. Catalysis depends on charge relay system residues His74 and Asp120. 2 disulfides stabilise this stretch: Cys185–Cys200 and Cys211–Cys235. Catalysis depends on Ser215, which acts as the Charge relay system.

Belongs to the peptidase S1 family.

The protein resides in the secreted. Its subcellular location is the extracellular space. The catalysed reaction is Preferential cleavage: Arg-|-Xaa, Lys-|-Xaa.. This chain is Trypsin eta (etaTry), found in Drosophila erecta (Fruit fly).